The sequence spans 1501 residues: Ribulose bisphosphate carboxylase (1501 aa).

Residue asparagine 111 participates in substrate binding. The active-site Proton acceptor is lysine 166. Position 168 (lysine 168) interacts with substrate. Residues lysine 191, aspartate 193, and glutamate 194 each coordinate Mg(2+). Lysine 191 carries the N6-carboxylysine modification. Histidine 287 acts as the Proton acceptor in catalysis. Substrate contacts are provided by arginine 288, histidine 321, and serine 368. The propeptide at 486 to 508 (SAAAFVGASVAPAKKENVVARQA) is linker. Asparagine 619 contacts substrate. Lysine 674 serves as the catalytic Proton acceptor. Substrate is bound at residue lysine 676. The Mg(2+) site is built by lysine 699, aspartate 701, and glutamate 702. At lysine 699 the chain carries N6-carboxylysine. Histidine 795 (proton acceptor) is an active-site residue. 3 residues coordinate substrate: arginine 796, histidine 829, and serine 876. A propeptide spans 994-1016 (SAAAFVGASVAPAKKENVVARQA) (linker). Asparagine 1127 is a binding site for substrate. Lysine 1182 serves as the catalytic Proton acceptor. Residue lysine 1184 participates in substrate binding. Residues lysine 1207, aspartate 1209, and glutamate 1210 each coordinate Mg(2+). Lysine 1207 is subject to N6-carboxylysine. The active-site Proton acceptor is the histidine 1303. Substrate-binding residues include arginine 1304, histidine 1337, and serine 1384.

It belongs to the RuBisCO large chain family. Type II subfamily. As to quaternary structure, homodimer. Mg(2+) serves as cofactor.

It is found in the plastid. The protein resides in the chloroplast. It catalyses the reaction 2 (2R)-3-phosphoglycerate + 2 H(+) = D-ribulose 1,5-bisphosphate + CO2 + H2O. It carries out the reaction D-ribulose 1,5-bisphosphate + O2 = 2-phosphoglycolate + (2R)-3-phosphoglycerate + 2 H(+). Functionally, ruBisCO catalyzes two reactions: the carboxylation of D-ribulose 1,5-bisphosphate, the primary event in carbon dioxide fixation, as well as the oxidative fragmentation of the pentose substrate. Both reactions occur simultaneously and in competition at the same active site. The chain is Ribulose bisphosphate carboxylase (rbcL) from Symbiodinium sp. (Dinoflagellate).